The primary structure comprises 212 residues: Inactive ribonuclease-like protein 10 (212 aa).

An N-terminal signal peptide occupies residues 1-24; it reads MKVTLVHLLFMMLLLLLGLGVGLG. N-linked (GlcNAc...) asparagine glycosylation is found at Asn-129 and Asn-204.

Belongs to the pancreatic ribonuclease family. In terms of processing, the N-terminus is blocked. Glycosylated. As to expression, male-specific expression in proximal caput of the epididymis.

The protein localises to the secreted. Its function is as follows. Secreted proximal epididymal protein required for post-testicular sperm maturation and male fertility. May be involved in sperm adhesion to the egg zona pellucida. Does not have ribonuclease activity. The protein is Inactive ribonuclease-like protein 10 (Rnase10) of Rattus norvegicus (Rat).